A 581-amino-acid chain; its full sequence is Arginine--tRNA ligase (581 aa).

Residues 126-136 carry the 'HIGH' region motif; it reads PNLAKEMHVGH.

The protein belongs to the class-I aminoacyl-tRNA synthetase family. In terms of assembly, monomer.

It localises to the cytoplasm. The catalysed reaction is tRNA(Arg) + L-arginine + ATP = L-arginyl-tRNA(Arg) + AMP + diphosphate. In Shewanella baltica (strain OS155 / ATCC BAA-1091), this protein is Arginine--tRNA ligase.